The sequence spans 219 residues: Casparian strip membrane protein 3 (219 aa).

The interval 1–43 (MDPGREDEVPLAATSPESRRTRSNGRGKATVGDAPPPAETVVS) is disordered. Topologically, residues 1–57 (MDPGREDEVPLAATSPESRRTRSNGRGKATVGDAPPPAETVVSTKAAPLPTGGWKKG) are cytoplasmic. A helical membrane pass occupies residues 58–78 (IAILDFILRLGAIGAAMGASI). Residues 79 to 108 (LMGTNEQILPFFTQFLQFHAQWDDFPVFKL) lie on the Extracellular side of the membrane. Residues 109 to 129 (FVVLNALAGGFLILSLPLSIV) form a helical membrane-spanning segment. Residues 130–147 (CIVRPLAVGPRFLLLITD) are Cytoplasmic-facing. The helical transmembrane segment at 148-168 (LVNMATVIAAASAAAAIVYVA) threads the bilayer. Residues 169–193 (HNGSQDANWIAICQQFTDFCQGTSE) lie on the Extracellular side of the membrane. N170 carries N-linked (GlcNAc...) asparagine glycosylation. The helical transmembrane segment at 194-214 (AVVVSFVAAVFLVCLIVVSTL) threads the bilayer. Residues 215–219 (ALKRT) lie on the Cytoplasmic side of the membrane.

It belongs to the Casparian strip membrane proteins (CASP) family. Homodimer and heterodimers.

The protein localises to the cell membrane. Its function is as follows. Regulates membrane-cell wall junctions and localized cell wall deposition. Required for establishment of the Casparian strip membrane domain (CSD) and the subsequent formation of Casparian strips, a cell wall modification of the root endodermis that determines an apoplastic barrier between the intraorganismal apoplasm and the extraorganismal apoplasm and prevents lateral diffusion. The sequence is that of Casparian strip membrane protein 3 from Lotus japonicus (Lotus corniculatus var. japonicus).